A 583-amino-acid chain; its full sequence is Cell division protein FtsZ (583 aa).

GTP-binding positions include 24 to 28 (GGGGN), 111 to 113 (GTG), glutamate 142, arginine 146, and aspartate 190. Disordered regions lie at residues 391–425 (HQQPSQDFRPQSKLFASSPAEAPAALRPAQPVQQA) and 510–583 (TNSL…RQSN). A compositionally biased stretch (low complexity) spans 412–425 (APAALRPAQPVQQA).

Belongs to the FtsZ family. As to quaternary structure, homodimer. Polymerizes to form a dynamic ring structure in a strictly GTP-dependent manner. Interacts directly with several other division proteins.

The protein resides in the cytoplasm. Functionally, essential cell division protein that forms a contractile ring structure (Z ring) at the future cell division site. The regulation of the ring assembly controls the timing and the location of cell division. One of the functions of the FtsZ ring is to recruit other cell division proteins to the septum to produce a new cell wall between the dividing cells. Binds GTP and shows GTPase activity. This Rhizobium radiobacter (Agrobacterium tumefaciens) protein is Cell division protein FtsZ.